Reading from the N-terminus, the 185-residue chain is uncharacterized protein (185 aa).

2 helical membrane passes run 1–21 (MMKF…LTPE) and 111–131 (FLWI…AFAW).

To A.aeolicus aq_1900.

It localises to the cell membrane. This is an uncharacterized protein from Aquifex aeolicus (strain VF5).